The primary structure comprises 417 residues: NADH-quinone oxidoreductase subunit D (417 aa).

The protein belongs to the complex I 49 kDa subunit family. As to quaternary structure, NDH-1 is composed of 14 different subunits. Subunits NuoB, C, D, E, F, and G constitute the peripheral sector of the complex.

Its subcellular location is the cell inner membrane. It catalyses the reaction a quinone + NADH + 5 H(+)(in) = a quinol + NAD(+) + 4 H(+)(out). In terms of biological role, NDH-1 shuttles electrons from NADH, via FMN and iron-sulfur (Fe-S) centers, to quinones in the respiratory chain. The immediate electron acceptor for the enzyme in this species is believed to be ubiquinone. Couples the redox reaction to proton translocation (for every two electrons transferred, four hydrogen ions are translocated across the cytoplasmic membrane), and thus conserves the redox energy in a proton gradient. The protein is NADH-quinone oxidoreductase subunit D of Burkholderia ambifaria (strain MC40-6).